The primary structure comprises 86 residues: Small ribosomal subunit protein bS20 (86 aa).

Positions 1–27 (MANSKQAKKRAGQSEKRRQHNASRRSM) are disordered.

Belongs to the bacterial ribosomal protein bS20 family.

Its function is as follows. Binds directly to 16S ribosomal RNA. The polypeptide is Small ribosomal subunit protein bS20 (Colwellia psychrerythraea (strain 34H / ATCC BAA-681) (Vibrio psychroerythus)).